The following is a 188-amino-acid chain: Actin-related protein 2/3 complex subunit 3 (188 aa).

The protein belongs to the ARPC3 family. As to quaternary structure, component of the Arp2/3 complex.

Its subcellular location is the cytoplasm. It localises to the cytoskeleton. In terms of biological role, functions as a component of the Arp2/3 complex which is involved in regulation of actin polymerization and together with an activating nucleation-promoting factor (NPF) mediates the formation of branched actin networks. The chain is Actin-related protein 2/3 complex subunit 3 from Entamoeba histolytica (strain ATCC 30459 / HM-1:IMSS / ABRM).